The chain runs to 399 residues: Acetate kinase (399 aa).

N10 is a binding site for Mg(2+). Position 17 (K17) interacts with ATP. Substrate is bound at residue R91. D148 (proton donor/acceptor) is an active-site residue. ATP is bound by residues 208–212, 283–285, and 331–335; these read HLGNG, DCR, and GIGEN. Position 385 (E385) interacts with Mg(2+).

Belongs to the acetokinase family. Homodimer. The cofactor is Mg(2+). It depends on Mn(2+) as a cofactor.

Its subcellular location is the cytoplasm. It carries out the reaction acetate + ATP = acetyl phosphate + ADP. The protein operates within metabolic intermediate biosynthesis; acetyl-CoA biosynthesis; acetyl-CoA from acetate: step 1/2. In terms of biological role, catalyzes the formation of acetyl phosphate from acetate and ATP. Can also catalyze the reverse reaction. This is Acetate kinase from Shewanella sp. (strain ANA-3).